The primary structure comprises 572 residues: Cytosolic Fe-S cluster assembly factor NAR1 (572 aa).

[4Fe-4S] cluster contacts are provided by Cys20, Cys62, Cys65, Cys68, Cys205, and Cys260. Residues Ala416–Lys436 are disordered. Residues Cys450 and Cys454 each contribute to the [4Fe-4S] cluster site.

This sequence belongs to the NARF family.

Functionally, component of the cytosolic Fe/S protein assembly machinery. Required for maturation of extramitochondrial Fe/S proteins. May play a role in the transfer of pre-assembled Fe/S clusters to target apoproteins. The protein is Cytosolic Fe-S cluster assembly factor NAR1 (NAR1) of Botryotinia fuckeliana (strain B05.10) (Noble rot fungus).